The primary structure comprises 441 residues: Ribosomal protein uS12 methylthiotransferase RimO (441 aa).

Positions 8 to 118 constitute an MTTase N-terminal domain; that stretch reads PKIGFVSLGC…VLQHVHHYVP (111 aa). Positions 17, 53, 82, 150, 154, and 157 each coordinate [4Fe-4S] cluster. One can recognise a Radical SAM core domain in the interval 136 to 373; that stretch reads LTPRHYAYLK…MQLQQQISAE (238 aa). The TRAM domain maps to 376 to 441; that stretch reads QEKVGREILV…DEYDLWGSRV (66 aa).

It belongs to the methylthiotransferase family. RimO subfamily. The cofactor is [4Fe-4S] cluster.

Its subcellular location is the cytoplasm. The enzyme catalyses L-aspartate(89)-[ribosomal protein uS12]-hydrogen + (sulfur carrier)-SH + AH2 + 2 S-adenosyl-L-methionine = 3-methylsulfanyl-L-aspartate(89)-[ribosomal protein uS12]-hydrogen + (sulfur carrier)-H + 5'-deoxyadenosine + L-methionine + A + S-adenosyl-L-homocysteine + 2 H(+). Catalyzes the methylthiolation of an aspartic acid residue of ribosomal protein uS12. The protein is Ribosomal protein uS12 methylthiotransferase RimO of Salmonella heidelberg (strain SL476).